A 659-amino-acid polypeptide reads, in one-letter code: RNA polymerase II subunit A C-terminal domain phosphatase (659 aa).

In terms of domain architecture, FCP1 homology spans 139–303; that stretch reads ITNRKLVLLV…KNSKEQMPVQ (165 aa). One can recognise a BRCT domain in the interval 351–443; that stretch reads ERHKVLDGCV…LKADENLFQL (93 aa). Acidic residues predominate over residues 484-504; that stretch reads ALSDDEDDGDNEDEDDDGNDV. Residues 484–640 form a disordered region; it reads ALSDDEDDGD…PESDDDDEFE (157 aa). Positions 505–519 are enriched in basic and acidic residues; the sequence is GEDKGDENLEEKQEK. Residues 529-538 are compositionally biased toward polar residues; the sequence is QNGSVENQSG. Composition is skewed to acidic residues over residues 560 to 576, 596 to 607, and 616 to 640; these read MEDE…DDDT, ENEDDAVFDVDD, and IDEE…DEFE.

It is found in the nucleus. The catalysed reaction is O-phospho-L-seryl-[protein] + H2O = L-seryl-[protein] + phosphate. The enzyme catalyses O-phospho-L-threonyl-[protein] + H2O = L-threonyl-[protein] + phosphate. Its function is as follows. During the late stages of oogenesis, dephosphorylates 'Ser-5' of the heptad repeats YSPTSPS in the C-terminal domain of the largest RNA polymerase II subunit ama-1. Similarly, dephosphorylates 'Ser-5' of ama-1 in early embryonic cells prior to the activation of the zygotic transcription program at the 4-cell embryonic stage. May dephosphorylate 'Ser-2' of the ama-1 heptad repeats YSPTSPS in embryonic somatic and germline cells. The polypeptide is RNA polymerase II subunit A C-terminal domain phosphatase (Caenorhabditis elegans).